A 353-amino-acid chain; its full sequence is Paraneoplastic antigen Ma1 homolog (353 aa).

This sequence belongs to the PNMA family. As to expression, testis and brain specific.

Its subcellular location is the nucleus. The protein resides in the nucleolus. The chain is Paraneoplastic antigen Ma1 homolog (Pnma1) from Rattus norvegicus (Rat).